The primary structure comprises 781 residues: Transcription factor Sp3 (781 aa).

The span at 1–12 (MTAPEKPVKQEE) shows a compositional bias: basic and acidic residues. 2 disordered regions span residues 1–53 (MTAP…AAQD) and 65–88 (TCSK…AGAP). The span at 20 to 31 (SGGGGGGGGGHG) shows a compositional bias: gly residues. A compositionally biased stretch (low complexity) spans 32–53 (EYLQQQQQHGNGAVAAAAAAQD). Ser-73 bears the Phosphoserine mark. Residue Lys-120 forms a Glycyl lysine isopeptide (Lys-Gly) (interchain with G-Cter in SUMO) linkage. Residues 138–237 (QYVLPLQNLQ…IPQTGQVQVQ (100 aa)) are transactivation domain (Gln-rich). The segment at 301 to 338 (QAMDSSDNSERTGERVSPDINETNTDTDLFVPTSSSSQ) is disordered. Basic and acidic residues predominate over residues 308–317 (NSERTGERVS). Polar residues predominate over residues 320–338 (INETNTDTDLFVPTSSSSQ). The interval 350-499 (QQNTNSLTTS…TPVQTLTLGQ (150 aa)) is transactivation domain (Gln-rich). Positions 461–469 (VTWQTFQVQ) match the 9aaTAD motif. The interval 534 to 620 (IQLHPGENAD…RGTNLGKKKQ (87 aa)) is repressor domain. N6-acetyllysine; alternate is present on Lys-551. Lys-551 is covalently cross-linked (Glycyl lysine isopeptide (Lys-Gly) (interchain with G-Cter in SUMO); alternate). Residue Lys-551 forms a Glycyl lysine isopeptide (Lys-Gly) (interchain with G-Cter in SUMO1); alternate linkage. Residue Lys-551 forms a Glycyl lysine isopeptide (Lys-Gly) (interchain with G-Cter in SUMO2); alternate linkage. Ser-563 and Ser-566 each carry phosphoserine. Lys-593 is covalently cross-linked (Glycyl lysine isopeptide (Lys-Gly) (interchain with G-Cter in SUMO2)). Residues 621–645 (HICHIPGCGKVYGKTSHLRAHLRWH) form a C2H2-type 1 zinc finger. Position 646 is a phosphoserine (Ser-646). 2 consecutive C2H2-type zinc fingers follow at residues 651–675 (FVCN…RRTH) and 681–703 (FVCP…IKTH).

Belongs to the Sp1 C2H2-type zinc-finger protein family. As to quaternary structure, interacts with HLTF; the interaction may be required for basal transcriptional activity of HLTF. Interacts with HDAC1; the interaction deacetylates SP3 and regulates its transcriptional activity. Interacts with HDAC2 (preferably the CK2-phosphorylated form); the interaction deacetylates SP3 and regulates its transcriptional activity. Interacts with MEIS2 isoform 4 and PBX1 isoform PBX1a. In terms of processing, not glycosylated. Acetylated by histone acetyltransferase p300, deacetylated by HDACs. Acetylation/deacetylation states regulate transcriptional activity. Acetylation appears to activate transcription. Alternate sumoylation and acetylation at Lys-551 also control transcriptional activity. Ceramides can also regulate acetylation/deacetylation events through altering the interaction of HDAC with SP3. In vitro, C(18)-ceramides, but not C(16)-ceramides, increase the interaction of HDAC1 with SP3 and enhance the deacetylation of SP3 and the subsequent repression of the TERT promoter. Post-translationally, sumoylated on all isoforms. Sumoylated on 2 sites in longer isoforms with Lys-551 being the major site. Sumoylation at this site promotes nuclear localization to the nuclear periphery, nuclear dots and PML nuclear bodies. Sumoylation on Lys-551 represses the transactivation activity, except for the largest isoform, L-Sp3, which has little effect on transactivation. Alternate sumoylation and acetylation at Lys-551 also control transcriptional activity. As to expression, ubiquitously expressed.

The protein localises to the nucleus. The protein resides in the PML body. Transcriptional factor that can act as an activator or repressor depending on isoform and/or post-translational modifications. Binds to GT and GC boxes promoter elements. Competes with SP1 for the GC-box promoters. Weak activator of transcription but can activate a number of genes involved in different processes such as cell-cycle regulation, hormone-induction and house-keeping. In Homo sapiens (Human), this protein is Transcription factor Sp3 (SP3).